The sequence spans 387 residues: Sulfopyruvate decarboxylase (387 aa).

The protein belongs to the TPP enzyme family. Thiamine diphosphate serves as cofactor.

It catalyses the reaction 3-sulfopyruvate + H(+) = sulfoacetaldehyde + CO2. Its pathway is cofactor biosynthesis; coenzyme M biosynthesis. Its function is as follows. Involved in the biosynthesis of the coenzyme M (2-mercaptoethanesulfonic acid). Catalyzes the decarboxylation of sulfopyruvate to sulfoacetaldehyde. Is not able to decarboxylate the analogous compounds 2-oxoglutarate or 2-oxosuberate. The sequence is that of Sulfopyruvate decarboxylase from Methanosarcina acetivorans (strain ATCC 35395 / DSM 2834 / JCM 12185 / C2A).